We begin with the raw amino-acid sequence, 90 residues long: Acylphosphatase (90 aa).

Positions alanine 3 to tyrosine 90 constitute an Acylphosphatase-like domain. Active-site residues include arginine 18 and asparagine 36.

It belongs to the acylphosphatase family.

The catalysed reaction is an acyl phosphate + H2O = a carboxylate + phosphate + H(+). This Pediococcus pentosaceus (strain ATCC 25745 / CCUG 21536 / LMG 10740 / 183-1w) protein is Acylphosphatase (acyP).